A 425-amino-acid polypeptide reads, in one-letter code: 3-phosphoshikimate 1-carboxyvinyltransferase (425 aa).

3-phosphoshikimate is bound by residues Lys22, Ser23, and Arg27. Lys22 is a phosphoenolpyruvate binding site. Phosphoenolpyruvate is bound by residues Gly95 and Arg123. The 3-phosphoshikimate site is built by Ser169, Ser170, Gln171, Ser197, Asp313, Asn336, and Lys340. Gln171 contacts phosphoenolpyruvate. The active-site Proton acceptor is the Asp313. The phosphoenolpyruvate site is built by Arg344, Arg386, and Lys411.

It belongs to the EPSP synthase family. As to quaternary structure, monomer.

The protein resides in the cytoplasm. It catalyses the reaction 3-phosphoshikimate + phosphoenolpyruvate = 5-O-(1-carboxyvinyl)-3-phosphoshikimate + phosphate. Its pathway is metabolic intermediate biosynthesis; chorismate biosynthesis; chorismate from D-erythrose 4-phosphate and phosphoenolpyruvate: step 6/7. Functionally, catalyzes the transfer of the enolpyruvyl moiety of phosphoenolpyruvate (PEP) to the 5-hydroxyl of shikimate-3-phosphate (S3P) to produce enolpyruvyl shikimate-3-phosphate and inorganic phosphate. The chain is 3-phosphoshikimate 1-carboxyvinyltransferase from Pseudoalteromonas translucida (strain TAC 125).